The primary structure comprises 583 residues: Aspartate--tRNA ligase (583 aa).

Glu-174 provides a ligand contact to L-aspartate. The tract at residues 198 to 201 is aspartate; it reads QITK. Arg-220 is a binding site for L-aspartate. ATP-binding positions include 220–222 and Gln-229; that span reads RDE. Residue His-443 participates in L-aspartate binding. Glu-477 serves as a coordination point for ATP. Arg-484 contributes to the L-aspartate binding site. 529–532 lines the ATP pocket; it reads GLDR.

The protein belongs to the class-II aminoacyl-tRNA synthetase family. Type 1 subfamily. Homodimer.

It is found in the cytoplasm. The enzyme catalyses tRNA(Asp) + L-aspartate + ATP = L-aspartyl-tRNA(Asp) + AMP + diphosphate. Its function is as follows. Catalyzes the attachment of L-aspartate to tRNA(Asp) in a two-step reaction: L-aspartate is first activated by ATP to form Asp-AMP and then transferred to the acceptor end of tRNA(Asp). The chain is Aspartate--tRNA ligase from Streptococcus suis (strain 98HAH33).